Here is a 183-residue protein sequence, read N- to C-terminus: Bifunctional protein PyrR (183 aa).

A PRPP-binding motif is present at residues 98–110 (VVLVDDVLYTGRT).

The protein belongs to the purine/pyrimidine phosphoribosyltransferase family. PyrR subfamily.

It catalyses the reaction UMP + diphosphate = 5-phospho-alpha-D-ribose 1-diphosphate + uracil. Functionally, regulates the transcription of the pyrimidine nucleotide (pyr) operon in response to exogenous pyrimidines. Also displays a weak uracil phosphoribosyltransferase activity which is not physiologically significant. The polypeptide is Bifunctional protein PyrR (Roseiflexus sp. (strain RS-1)).